A 281-amino-acid polypeptide reads, in one-letter code: Diaminopimelate epimerase (281 aa).

Positions 13 and 66 each coordinate substrate. Residue Cys-75 is the Proton donor of the active site. Substrate contacts are provided by residues 76 to 77 (GN), Asn-164, Asn-197, and 215 to 216 (ER). Cys-224 acts as the Proton acceptor in catalysis. Substrate is bound at residue 225–226 (GT).

The protein belongs to the diaminopimelate epimerase family. Homodimer.

It is found in the cytoplasm. The enzyme catalyses (2S,6S)-2,6-diaminopimelate = meso-2,6-diaminopimelate. It participates in amino-acid biosynthesis; L-lysine biosynthesis via DAP pathway; DL-2,6-diaminopimelate from LL-2,6-diaminopimelate: step 1/1. In terms of biological role, catalyzes the stereoinversion of LL-2,6-diaminopimelate (L,L-DAP) to meso-diaminopimelate (meso-DAP), a precursor of L-lysine and an essential component of the bacterial peptidoglycan. This Rippkaea orientalis (strain PCC 8801 / RF-1) (Cyanothece sp. (strain PCC 8801)) protein is Diaminopimelate epimerase.